The following is a 442-amino-acid chain: Armadillo-like helical domain containing protein 1 (442 aa).

This Bos taurus (Bovine) protein is Armadillo-like helical domain containing protein 1.